The sequence spans 429 residues: 3-phosphoshikimate 1-carboxyvinyltransferase (429 aa).

Residues Lys-21, Ser-22, and Arg-26 each coordinate 3-phosphoshikimate. Lys-21 contacts phosphoenolpyruvate. The phosphoenolpyruvate site is built by Gly-94 and Arg-122. Residues Ser-167, Gln-169, Asp-315, and Lys-342 each contribute to the 3-phosphoshikimate site. A phosphoenolpyruvate-binding site is contributed by Gln-169. Asp-315 serves as the catalytic Proton acceptor. Phosphoenolpyruvate is bound by residues Arg-346 and Arg-388.

This sequence belongs to the EPSP synthase family. In terms of assembly, monomer.

It localises to the cytoplasm. The catalysed reaction is 3-phosphoshikimate + phosphoenolpyruvate = 5-O-(1-carboxyvinyl)-3-phosphoshikimate + phosphate. It participates in metabolic intermediate biosynthesis; chorismate biosynthesis; chorismate from D-erythrose 4-phosphate and phosphoenolpyruvate: step 6/7. Its function is as follows. Catalyzes the transfer of the enolpyruvyl moiety of phosphoenolpyruvate (PEP) to the 5-hydroxyl of shikimate-3-phosphate (S3P) to produce enolpyruvyl shikimate-3-phosphate and inorganic phosphate. The polypeptide is 3-phosphoshikimate 1-carboxyvinyltransferase (Desulforudis audaxviator (strain MP104C)).